Here is a 764-residue protein sequence, read N- to C-terminus: Serine/threonine-protein kinase MPS1 (764 aa).

3 disordered regions span residues 66–95, 197–216, and 258–316; these read EEMD…SSHS, ELPL…RNTD, and QAAL…KSSI. The span at 85–95 shows a compositional bias: low complexity; that stretch reads TSGHTSTSSHS. The span at 201-216 shows a compositional bias: basic and acidic residues; the sequence is EDSHQTNFKETKRNTD. Low complexity-rich tracts occupy residues 272-292 and 306-315; these read KSRS…KDNS and STGSSSSKSS. Residues 440–720 enclose the Protein kinase domain; it reads YEKIELLGRG…LSSTFLQPFM (281 aa). ATP is bound by residues 446 to 454 and Lys-468; that span reads LGRGGSSRV. Residue Asp-563 is the Proton acceptor of the active site.

The protein belongs to the protein kinase superfamily. Ser/Thr protein kinase family. Post-translationally, autophosphorylated.

The enzyme catalyses L-seryl-[protein] + ATP = O-phospho-L-seryl-[protein] + ADP + H(+). It carries out the reaction L-threonyl-[protein] + ATP = O-phospho-L-threonyl-[protein] + ADP + H(+). The catalysed reaction is L-tyrosyl-[protein] + ATP = O-phospho-L-tyrosyl-[protein] + ADP + H(+). Involved in mitotic spindle assembly checkpoint signaling, a process that delays anaphase until chromosomes are bioriented on the spindle, and in the repair of incorrect mitotic kinetochore-spindle microtubule attachments. Phosphorylates SPC105 on MELT motifs; phosphorylation is required for recruitment of the BUB1-BUB3 complex to kinetochores. Phosphorylates CNN1, which contributes to the enrichment of CNN1 on anaphase kinetochores. Implicated in spindle pole body (SPD) duplication. Phosphorylates the SPC29 and SPC110 spindle pole body components. The sequence is that of Serine/threonine-protein kinase MPS1 (MPS1) from Saccharomyces cerevisiae (strain ATCC 204508 / S288c) (Baker's yeast).